Here is an 87-residue protein sequence, read N- to C-terminus: Large ribosomal subunit protein bL31B-2/bL31B-3 (87 aa).

This sequence belongs to the bacterial ribosomal protein bL31 family. Type B subfamily. In terms of assembly, part of the 50S ribosomal subunit.

This is Large ribosomal subunit protein bL31B-2/bL31B-3 (rpmE2-2) from Escherichia coli O157:H7.